Reading from the N-terminus, the 244-residue chain is Meiotic drive suppressor wtf2 (244 aa).

Residues 1 to 10 (MKNNYTSLKS) show a composition bias toward polar residues. The interval 1-68 (MKNNYTSLKS…RENNPSRSTD (68 aa)) is disordered. The segment covering 17–30 (ELKTDHEIDLEKGP) has biased composition (basic and acidic residues). 4 helical membrane passes run 73–93 (FLIKLLISFTPIYVLNVLAIC), 110–130 (WTLFGFWCLVCTLALIFLTYF), 149–169 (WENMPMAFSEVFLFNILVGSP), and 183–203 (LKWSLAEHITFVVLSILVFIA).

It belongs to the WTF family. In terms of assembly, homomer. Interacts with other proteins that exhibit high sequence similarity.

The protein localises to the spore membrane. It is found in the vacuole membrane. Functionally, acts as a suppressor component of the dual wtf meiotic drive system, and can suppress but not confer meiotic drive by compatible poisons. Wtf meiotic drive systems promote unequal transmission of alleles from the parental zygote to progeny spores by encoding a poison and an antidote from the same locus; the poison is trans-acting and forms toxic aggregates in all spores within an ascus, wherease the antidote is spore-specific and targets aggregates for degradation by the vacuole. Meiotic drive by wtf systems therefore lead to poisoning of all progeny that do not inherit the dual poison/antidote allele, or express a compatible antidote. This Schizosaccharomyces kambucha (Fission yeast) protein is Meiotic drive suppressor wtf2.